Here is a 386-residue protein sequence, read N- to C-terminus: Putative 8-amino-7-oxononanoate synthase (386 aa).

R26 lines the substrate pocket. 113–114 serves as a coordination point for pyridoxal 5'-phosphate; it reads GY. H138 provides a ligand contact to substrate. Residues S186, 211–214, and 240–243 each bind pyridoxal 5'-phosphate; these read DDAH and TLSK. N6-(pyridoxal phosphate)lysine is present on K243. Residue T352 coordinates substrate.

It belongs to the class-II pyridoxal-phosphate-dependent aminotransferase family. BioF subfamily. Homodimer. The cofactor is pyridoxal 5'-phosphate.

The enzyme catalyses 6-carboxyhexanoyl-[ACP] + L-alanine + H(+) = (8S)-8-amino-7-oxononanoate + holo-[ACP] + CO2. It participates in cofactor biosynthesis; biotin biosynthesis. In terms of biological role, catalyzes the decarboxylative condensation of pimeloyl-[acyl-carrier protein] and L-alanine to produce 8-amino-7-oxononanoate (AON), [acyl-carrier protein], and carbon dioxide. The sequence is that of Putative 8-amino-7-oxononanoate synthase (bioF) from Phenylobacterium zucineum (strain HLK1).